Here is a 311-residue protein sequence, read N- to C-terminus: DNA-directed RNA polymerase subunit alpha (311 aa).

Residues 1–227 are alpha N-terminal domain (alpha-NTD); the sequence is MNNISIKCLK…DLFTLLINNK (227 aa). An alpha C-terminal domain (alpha-CTD) region spans residues 242-311; it reads ISIEPYTNIA…LKNKLGIILK (70 aa).

Belongs to the RNA polymerase alpha chain family. In plastids the minimal PEP RNA polymerase catalytic core is composed of four subunits: alpha, beta, beta', and beta''. When a (nuclear-encoded) sigma factor is associated with the core the holoenzyme is formed, which can initiate transcription.

Its subcellular location is the plastid. The protein resides in the chloroplast. The catalysed reaction is RNA(n) + a ribonucleoside 5'-triphosphate = RNA(n+1) + diphosphate. DNA-dependent RNA polymerase catalyzes the transcription of DNA into RNA using the four ribonucleoside triphosphates as substrates. The protein is DNA-directed RNA polymerase subunit alpha of Phaeodactylum tricornutum (strain CCAP 1055/1).